We begin with the raw amino-acid sequence, 268 residues long: Taurine import ATP-binding protein TauB (268 aa).

The ABC transporter domain maps to 4 to 236; it reads LSINNLSMRF…LGVDSDLREV (233 aa). Position 41–48 (41–48) interacts with ATP; the sequence is GPSGCGKT.

This sequence belongs to the ABC transporter superfamily. Taurine importer (TC 3.A.1.17.1) family. As to quaternary structure, the complex is composed of two ATP-binding proteins (TauB), two transmembrane proteins (TauC) and a solute-binding protein (TauA).

The protein localises to the cell inner membrane. The catalysed reaction is taurine(out) + ATP + H2O = taurine(in) + ADP + phosphate + H(+). In terms of biological role, part of the ABC transporter complex TauABC involved in taurine import. Responsible for energy coupling to the transport system. This chain is Taurine import ATP-binding protein TauB, found in Roseobacter denitrificans (strain ATCC 33942 / OCh 114) (Erythrobacter sp. (strain OCh 114)).